Reading from the N-terminus, the 172-residue chain is Adenine phosphoribosyltransferase (172 aa).

It belongs to the purine/pyrimidine phosphoribosyltransferase family. In terms of assembly, homodimer.

It localises to the cytoplasm. It catalyses the reaction AMP + diphosphate = 5-phospho-alpha-D-ribose 1-diphosphate + adenine. Its pathway is purine metabolism; AMP biosynthesis via salvage pathway; AMP from adenine: step 1/1. In terms of biological role, catalyzes a salvage reaction resulting in the formation of AMP, that is energically less costly than de novo synthesis. The sequence is that of Adenine phosphoribosyltransferase from Microcystis aeruginosa (strain NIES-843 / IAM M-2473).